Here is a 426-residue protein sequence, read N- to C-terminus: Dihydroorotase (426 aa).

Zn(2+)-binding residues include His55 and His57. Residues 57 to 59 (HLR) and Asn89 each bind substrate. Residues Asp147, His174, His233, and Asp306 each coordinate Zn(2+). The active site involves Asp306. Residues His310 and 324 to 325 (FG) contribute to the substrate site.

It belongs to the metallo-dependent hydrolases superfamily. DHOase family. Class I DHOase subfamily. Requires Zn(2+) as cofactor.

The catalysed reaction is (S)-dihydroorotate + H2O = N-carbamoyl-L-aspartate + H(+). It participates in pyrimidine metabolism; UMP biosynthesis via de novo pathway; (S)-dihydroorotate from bicarbonate: step 3/3. In terms of biological role, catalyzes the reversible cyclization of carbamoyl aspartate to dihydroorotate. The sequence is that of Dihydroorotase from Thermus aquaticus.